Reading from the N-terminus, the 288-residue chain is Elongation factor Ts (288 aa).

Residues 82–85 (TDFV) are involved in Mg(2+) ion dislocation from EF-Tu.

Belongs to the EF-Ts family.

It is found in the cytoplasm. Its function is as follows. Associates with the EF-Tu.GDP complex and induces the exchange of GDP to GTP. It remains bound to the aminoacyl-tRNA.EF-Tu.GTP complex up to the GTP hydrolysis stage on the ribosome. The polypeptide is Elongation factor Ts (Chlorobium luteolum (strain DSM 273 / BCRC 81028 / 2530) (Pelodictyon luteolum)).